We begin with the raw amino-acid sequence, 211 residues long: Large ribosomal subunit protein bL9 (211 aa).

The interval 180 to 211 (DDIGAAGMDDDDDDAPAPAQADPSSEESSEED) is disordered.

The protein belongs to the bacterial ribosomal protein bL9 family.

Functionally, binds to the 23S rRNA. This is Large ribosomal subunit protein bL9 from Jannaschia sp. (strain CCS1).